The chain runs to 384 residues: Succinyl-diaminopimelate desuccinylase (384 aa).

A Zn(2+)-binding site is contributed by H75. D77 is a catalytic residue. D108 is a Zn(2+) binding site. E142 functions as the Proton acceptor in the catalytic mechanism. Zn(2+) contacts are provided by E143, E171, and H357.

Belongs to the peptidase M20A family. DapE subfamily. Homodimer. Requires Zn(2+) as cofactor. It depends on Co(2+) as a cofactor.

It catalyses the reaction N-succinyl-(2S,6S)-2,6-diaminopimelate + H2O = (2S,6S)-2,6-diaminopimelate + succinate. It participates in amino-acid biosynthesis; L-lysine biosynthesis via DAP pathway; LL-2,6-diaminopimelate from (S)-tetrahydrodipicolinate (succinylase route): step 3/3. Functionally, catalyzes the hydrolysis of N-succinyl-L,L-diaminopimelic acid (SDAP), forming succinate and LL-2,6-diaminopimelate (DAP), an intermediate involved in the bacterial biosynthesis of lysine and meso-diaminopimelic acid, an essential component of bacterial cell walls. The chain is Succinyl-diaminopimelate desuccinylase from Shewanella oneidensis (strain ATCC 700550 / JCM 31522 / CIP 106686 / LMG 19005 / NCIMB 14063 / MR-1).